Here is a 199-residue protein sequence, read N- to C-terminus: Probable GTP-binding protein EngB (199 aa).

Residues 22 to 195 (QLPEIALSGR…WEWIEQQCDI (174 aa)) form the EngB-type G domain. Residues 30 to 37 (GRSNVGKS), 57 to 61 (GKTQT), 75 to 78 (DVPG), 142 to 145 (TKMD), and 174 to 176 (FSA) contribute to the GTP site. Residues Ser37 and Thr59 each coordinate Mg(2+).

Belongs to the TRAFAC class TrmE-Era-EngA-EngB-Septin-like GTPase superfamily. EngB GTPase family. Mg(2+) serves as cofactor.

In terms of biological role, necessary for normal cell division and for the maintenance of normal septation. This Latilactobacillus sakei subsp. sakei (strain 23K) (Lactobacillus sakei subsp. sakei) protein is Probable GTP-binding protein EngB.